A 199-amino-acid polypeptide reads, in one-letter code: Recombination protein RecR (199 aa).

Residues 58–73 (CKTCGNIDTQSPCTVC) form a C4-type zinc finger. The Toprim domain occupies 81-176 (AMIVVVADVA…KVTRLAHGVP (96 aa)).

This sequence belongs to the RecR family.

May play a role in DNA repair. It seems to be involved in an RecBC-independent recombinational process of DNA repair. It may act with RecF and RecO. This Bradyrhizobium sp. (strain ORS 278) protein is Recombination protein RecR.